Consider the following 355-residue polypeptide: Heme A synthase (355 aa).

Helical transmembrane passes span 21-41 (LARWLWAVALLVIIVVGVGGI), 85-102 (INLGMTLAGFKAIFFWEW), 136-156 (LFALTALVGLQGAIGWWMVAS), 173-193 (LLTALFLLAGLVWTARDLGAL), 208-228 (AIGVIAILFVQLLLGAWVAGL), 264-284 (FLIHFLHRWWSWAAAGALLLL), 299-319 (ALVIVVAAQMLLGIWTIVSGV), and 322-342 (WVAVMHQVVGAILVAVTAAAL). H270 contributes to the heme binding site. H327 is a heme binding site.

The protein belongs to the COX15/CtaA family. Type 2 subfamily. Interacts with CtaB. Heme b serves as cofactor.

Its subcellular location is the cell membrane. It catalyses the reaction Fe(II)-heme o + 2 A + H2O = Fe(II)-heme a + 2 AH2. The protein operates within porphyrin-containing compound metabolism; heme A biosynthesis; heme A from heme O: step 1/1. Its function is as follows. Catalyzes the conversion of heme O to heme A by two successive hydroxylations of the methyl group at C8. The first hydroxylation forms heme I, the second hydroxylation results in an unstable dihydroxymethyl group, which spontaneously dehydrates, resulting in the formyl group of heme A. The sequence is that of Heme A synthase from Sphingopyxis alaskensis (strain DSM 13593 / LMG 18877 / RB2256) (Sphingomonas alaskensis).